A 239-amino-acid polypeptide reads, in one-letter code: 7-cyano-7-deazaguanine synthase (239 aa).

13–23 contacts ATP; it reads FSGGQDSTTCL. Residues Cys-192, Cys-201, Cys-204, and Cys-207 each contribute to the Zn(2+) site.

It belongs to the QueC family. Requires Zn(2+) as cofactor.

The enzyme catalyses 7-carboxy-7-deazaguanine + NH4(+) + ATP = 7-cyano-7-deazaguanine + ADP + phosphate + H2O + H(+). It participates in purine metabolism; 7-cyano-7-deazaguanine biosynthesis. Functionally, catalyzes the ATP-dependent conversion of 7-carboxy-7-deazaguanine (CDG) to 7-cyano-7-deazaguanine (preQ(0)). This is 7-cyano-7-deazaguanine synthase from Shewanella sp. (strain MR-7).